The chain runs to 340 residues: Replication initiation protein (340 aa).

Residues 38-58 (PERKRTKRRRGEHSTKPKCEN) are disordered.

The polypeptide is Replication initiation protein (repA1) (Escherichia coli).